The sequence spans 88 residues: ATP synthase F(0) complex subunit f, mitochondrial (88 aa).

Position 2 is an N-acetylalanine (A2). A Phosphoserine modification is found at S3. K16 is subject to N6-acetyllysine. The chain crosses the membrane as a helical span at residues 62-79 (MVLAAYVVFNYCRSYKEL).

This sequence belongs to the ATPase F chain family. In terms of assembly, component of the ATP synthase complex composed at least of ATP5F1A/subunit alpha, ATP5F1B/subunit beta, ATP5MC1/subunit c (homooctomer), MT-ATP6/subunit a, MT-ATP8/subunit 8, ATP5ME/subunit e, ATP5MF/subunit f, ATP5MG/subunit g, ATP5MK/subunit k, ATP5MJ/subunit j, ATP5F1C/subunit gamma, ATP5F1D/subunit delta, ATP5F1E/subunit epsilon, ATP5PF/subunit F6, ATP5PB/subunit b, ATP5PD/subunit d, ATP5PO/subunit OSCP. ATP synthase complex consists of a soluble F(1) head domain (subunits alpha(3) and beta(3)) - the catalytic core - and a membrane F(0) domain - the membrane proton channel (subunits c, a, 8, e, f, g, k and j). These two domains are linked by a central stalk (subunits gamma, delta, and epsilon) rotating inside the F1 region and a stationary peripheral stalk (subunits F6, b, d, and OSCP).

The protein localises to the mitochondrion. It is found in the mitochondrion inner membrane. In terms of biological role, subunit f, of the mitochondrial membrane ATP synthase complex (F(1)F(0) ATP synthase or Complex V) that produces ATP from ADP in the presence of a proton gradient across the membrane which is generated by electron transport complexes of the respiratory chain. ATP synthase complex consist of a soluble F(1) head domain - the catalytic core - and a membrane F(1) domain - the membrane proton channel. These two domains are linked by a central stalk rotating inside the F(1) region and a stationary peripheral stalk. During catalysis, ATP synthesis in the catalytic domain of F(1) is coupled via a rotary mechanism of the central stalk subunits to proton translocation. In vivo, can only synthesize ATP although its ATP hydrolase activity can be activated artificially in vitro. Part of the complex F(0) domain. The protein is ATP synthase F(0) complex subunit f, mitochondrial of Sus scrofa (Pig).